The sequence spans 436 residues: UPF0597 protein YhaM (436 aa).

This sequence belongs to the UPF0597 family.

The sequence is that of UPF0597 protein YhaM from Shigella sonnei (strain Ss046).